The following is a 255-amino-acid chain: Electron transfer flavoprotein subunit beta (255 aa).

The residue at position 2 (A2) is an N-acetylalanine. Residues A9, 39–42 (NPFC), C66, and 123–134 (GKQAIDDDCNQT) contribute to the AMP site. A recognition loop region spans residues 183–205 (ADLRLNEPRYATLPNIMKAKKKK). K200 carries the post-translational modification N6,N6,N6-trimethyllysine; by ETFBKMT; alternate. K200 carries the N6-acetyllysine; alternate modification. K200 carries the post-translational modification N6-methyllysine; alternate. K203 is subject to N6,N6,N6-trimethyllysine; by ETFBKMT. K210 is modified (N6-acetyllysine; alternate). N6-succinyllysine; alternate is present on K210. A phosphoserine mark is found at S223 and S226. The residue at position 238 (K238) is an N6-acetyllysine. The residue at position 248 (K248) is an N6-acetyllysine; alternate. Residue K248 is modified to N6-succinyllysine; alternate.

This sequence belongs to the ETF beta-subunit/FixA family. Heterodimer composed of ETFA and ETFB. Identified in a complex that contains ETFA, ETFB and ETFRF1. Interacts with ACADM. Post-translationally, methylated. Trimethylation at Lys-200 and Lys-203 may negatively regulate the activity in electron transfer from acyl-CoA dehydrogenases.

The protein localises to the mitochondrion matrix. Its function is as follows. Heterodimeric electron transfer flavoprotein that accepts electrons from several mitochondrial dehydrogenases, including acyl-CoA dehydrogenases, glutaryl-CoA and sarcosine dehydrogenase. It transfers the electrons to the main mitochondrial respiratory chain via ETF-ubiquinone oxidoreductase. Required for normal mitochondrial fatty acid oxidation and normal amino acid metabolism. ETFB binds an AMP molecule that probably has a purely structural role. This chain is Electron transfer flavoprotein subunit beta, found in Sus scrofa (Pig).